Here is a 251-residue protein sequence, read N- to C-terminus: Hydroxyacylglutathione hydrolase (251 aa).

His53, His55, Asp57, His58, His110, Asp127, and His165 together coordinate Zn(2+).

This sequence belongs to the metallo-beta-lactamase superfamily. Glyoxalase II family. As to quaternary structure, monomer. The cofactor is Zn(2+).

The catalysed reaction is an S-(2-hydroxyacyl)glutathione + H2O = a 2-hydroxy carboxylate + glutathione + H(+). Its pathway is secondary metabolite metabolism; methylglyoxal degradation; (R)-lactate from methylglyoxal: step 2/2. Functionally, thiolesterase that catalyzes the hydrolysis of S-D-lactoyl-glutathione to form glutathione and D-lactic acid. This Enterobacter sp. (strain 638) protein is Hydroxyacylglutathione hydrolase.